Reading from the N-terminus, the 718-residue chain is MSVSGKKEFDVKQILRLRWRWFSHPFQGSTNTGSCLQQEGYEHRGTPVQGRLKSHSRDRNGLKKSNSPVHHNILAPVPGPAPAHQRAVQNLQQHNLIVHFQANEDTPKSVPEKNLFKEACEKRAQDLEMMADDNIEDSTARLDTQHSEDMNATRSEEQFHVINHAEQTLRKMENYLKEKQLCDVLLIAGHLRIPAHRLVLSAVSDYFAAMFTNDVLEAKQEEVRMEGVDPNALNSLVQYAYTGVLQLKEDTIESLLAAACLLQLTQVIDVCSNFLIKQLHPSNCLGIRSFGDAQGCTELLNVAHKYTMEHFIEVIKNQEFLLLPANEISKLLCSDDINVPDEETIFHALMQWVGHDVQNRQGELGMLLSYIRLPLLPPQLLADLETSSMFTGDLECQKLLMEAMKYHLLPERRSMMQSPRTKPRKSTVGALYAVGGMDAMKGTTTIEKYDLRTNSWLHIGTMNGRRLQFGVAVIDNKLYVVGGRDGLKTLNTVECFNPVGKIWTVMPPMSTHRHGLGVATLEGPMYAVGGHDGWSYLNTVERWDPEGRQWNYVASMSTPRSTVGVVALNNKLYAIGGRDGSSCLKSMEYFDPHTNKWSLCAPMSKRRGGVGVATYNGFLYVVGGHDAPASNHCSRLSDCVERYDPKGDSWSTVAPLSVPRDAVAVCPLGDKLYVVGGYDGHTYLNTVESYDAQRNEWKEEVPVNIGRAGACVVVVKLP.

A disordered region spans residues 46–69 (TPVQGRLKSHSRDRNGLKKSNSPV). The 68-residue stretch at 182-249 (CDVLLIAGHL…AYTGVLQLKE (68 aa)) folds into the BTB domain. 6 Kelch repeats span residues 430–476 (ALYA…VIDN), 477–523 (KLYV…TLEG), 525–570 (MYAV…ALNN), 571–617 (KLYA…TYNG), 619–670 (LYVV…PLGD), and 671–717 (KLYV…VVKL).

Expressed in adult fibroblasts and in a range of fetal tissues including tongue, palate, and mandible.

The protein resides in the cytoplasm. It localises to the cytoskeleton. This chain is Kelch-like protein 4 (KLHL4), found in Homo sapiens (Human).